We begin with the raw amino-acid sequence, 97 residues long: UstYa family oxidase VicYc (97 aa).

2 consecutive short sequence motifs (HXXHC) follow at residues 11–15 (HELHC) and 38–42 (HANHC).

The protein belongs to the ustYa family.

It participates in mycotoxin biosynthesis. Its function is as follows. UstYa family oxidase, part of the gene cluster that mediates the biosynthesis of the secondary metabolite victorin, the molecular basis for Victoria blight of oats. The role of vicYc within the pathway has still to be determined. The pathway starts with the processing of the precursor vicA1 by several endopeptidases including kexin proteases as well as the cluster-specific S28 family peptidases vicPa and vicPb to produce 7 identical copies of the hexapeptide Gly-Leu-Lys-Leu-Ala-Phe. After being excised from the precursor peptide, the core peptides are cyclized and modified post-translationally by enzymes encoded within the gene cluster. The ustYa family oxidase vicYb is required for the formation of the macrocycle in victorin and the copper amine oxidases (CAOs) vicK1 and vicK2 are responsible for converting victorin to the active form by oxidizing the N-terminal glycyl residue in the peptides to glyoxylate. Relaxed substrate specificity of enzymes in the victorin biosynthetic pathway results in a metabolic grid that produces a set of analogs including victorinines B, C, E or HV-toxin M. This chain is UstYa family oxidase VicYc, found in Bipolaris victoriae (strain FI3) (Victoria blight of oats agent).